A 360-amino-acid polypeptide reads, in one-letter code: MLVWLAEHLVKYYSGFNVFSYLTFRAIVSLLTALFISLWMGPRMIARLQKLSFGQVVRNDGPESHFSKRGTPTMGGIMILTAIVISVLLWAYPSNPYVWCVLVVLIGYGIIGFVDDYRKVVRKDTKGLIARWKYFWMSVIALGVAFALYLVGKDTPVTQLVVPFFKDVMPQLGLFYILLSYFVIVGTGNAVNLTDGLDGLAIMPTVFVAAGFALVAWATGNMNFANYLHIPYLRHAGELVIVCTAIVGAGLGFLWFNTYPAQVFMGDVGSLALGGALGIIAVLLRQEFLLVIMGGVFVVETLSVILQVGSFKLRGQRIFRMAPIHHHYELKGWPEPRVIVRFWIISLMLVLIGLATLKVR.

Over 1–25 (MLVWLAEHLVKYYSGFNVFSYLTFR) the chain is Periplasmic. Residues 26 to 46 (AIVSLLTALFISLWMGPRMIA) form a helical membrane-spanning segment. Topologically, residues 47–71 (RLQKLSFGQVVRNDGPESHFSKRGT) are cytoplasmic. The helical transmembrane segment at 72 to 92 (PTMGGIMILTAIVISVLLWAY) threads the bilayer. Proline 93 is a topological domain (periplasmic). A helical membrane pass occupies residues 94–114 (SNPYVWCVLVVLIGYGIIGFV). Residues 115 to 131 (DDYRKVVRKDTKGLIAR) lie on the Cytoplasmic side of the membrane. The helical transmembrane segment at 132–152 (WKYFWMSVIALGVAFALYLVG) threads the bilayer. Residues 153 to 167 (KDTPVTQLVVPFFKD) lie on the Periplasmic side of the membrane. The chain crosses the membrane as a helical span at residues 168 to 188 (VMPQLGLFYILLSYFVIVGTG). Residues 189–198 (NAVNLTDGLD) are Cytoplasmic-facing. Residues 199–219 (GLAIMPTVFVAAGFALVAWAT) form a helical membrane-spanning segment. Residues 220–235 (GNMNFANYLHIPYLRH) are Periplasmic-facing. The chain crosses the membrane as a helical span at residues 236-256 (AGELVIVCTAIVGAGLGFLWF). The Cytoplasmic segment spans residues 257–262 (NTYPAQ). Residues 263 to 283 (VFMGDVGSLALGGALGIIAVL) form a helical membrane-spanning segment. Residues 284 to 287 (LRQE) are Periplasmic-facing. A helical transmembrane segment spans residues 288–308 (FLLVIMGGVFVVETLSVILQV). Residues 309-337 (GSFKLRGQRIFRMAPIHHHYELKGWPEPR) lie on the Cytoplasmic side of the membrane. Residues 338–358 (VIVRFWIISLMLVLIGLATLK) traverse the membrane as a helical segment. The Periplasmic portion of the chain corresponds to 359–360 (VR).

The protein belongs to the glycosyltransferase 4 family. MraY subfamily. Mg(2+) is required as a cofactor.

The protein localises to the cell inner membrane. It carries out the reaction UDP-N-acetyl-alpha-D-muramoyl-L-alanyl-gamma-D-glutamyl-meso-2,6-diaminopimeloyl-D-alanyl-D-alanine + di-trans,octa-cis-undecaprenyl phosphate = di-trans,octa-cis-undecaprenyl diphospho-N-acetyl-alpha-D-muramoyl-L-alanyl-D-glutamyl-meso-2,6-diaminopimeloyl-D-alanyl-D-alanine + UMP. It functions in the pathway cell wall biogenesis; peptidoglycan biosynthesis. Catalyzes the initial step of the lipid cycle reactions in the biosynthesis of the cell wall peptidoglycan: transfers peptidoglycan precursor phospho-MurNAc-pentapeptide from UDP-MurNAc-pentapeptide onto the lipid carrier undecaprenyl phosphate, yielding undecaprenyl-pyrophosphoryl-MurNAc-pentapeptide, known as lipid I. This chain is Phospho-N-acetylmuramoyl-pentapeptide-transferase, found in Salmonella paratyphi C (strain RKS4594).